A 109-amino-acid polypeptide reads, in one-letter code: uncharacterized protein (109 aa).

The next 2 helical transmembrane spans lie at 19–39 (LELVENYVICFFTVLCFCLIP) and 53–73 (YFIDFFFFHLSPSIPFWFYPF).

The protein resides in the membrane. This is an uncharacterized protein from Saccharomyces cerevisiae (strain ATCC 204508 / S288c) (Baker's yeast).